The primary structure comprises 89 residues: Large ribosomal subunit protein eL34 (89 aa).

The interval 1–22 (MPAPRYKSGSSKKVYRKAPGNS) is disordered.

It belongs to the eukaryotic ribosomal protein eL34 family.

The protein is Large ribosomal subunit protein eL34 of Methanococcus maripaludis (strain C5 / ATCC BAA-1333).